We begin with the raw amino-acid sequence, 101 residues long: Glutaredoxin-1 (101 aa).

Residues 3 to 101 enclose the Glutaredoxin domain; sequence DSFVQSKLRD…MMLRQIGALV (99 aa). Cys23 and Cys26 are disulfide-bonded.

Belongs to the glutaredoxin family.

Its subcellular location is the cytoplasm. Its function is as follows. Has a glutathione-disulfide oxidoreductase activity in the presence of NADPH and glutathione reductase. Reduces low molecular weight disulfides and proteins. The sequence is that of Glutaredoxin-1 (GLRX) from Gallus gallus (Chicken).